A 347-amino-acid chain; its full sequence is Quinolinate synthase (347 aa).

H47 and S68 together coordinate iminosuccinate. C113 contributes to the [4Fe-4S] cluster binding site. Residues 139-141 and S156 each bind iminosuccinate; that span reads YAN. [4Fe-4S] cluster is bound at residue C200. Residues 226 to 228 and T243 contribute to the iminosuccinate site; that span reads HPE. Position 297 (C297) interacts with [4Fe-4S] cluster.

This sequence belongs to the quinolinate synthase family. Type 1 subfamily. Requires [4Fe-4S] cluster as cofactor.

It is found in the cytoplasm. The enzyme catalyses iminosuccinate + dihydroxyacetone phosphate = quinolinate + phosphate + 2 H2O + H(+). The protein operates within cofactor biosynthesis; NAD(+) biosynthesis; quinolinate from iminoaspartate: step 1/1. Functionally, catalyzes the condensation of iminoaspartate with dihydroxyacetone phosphate to form quinolinate. The chain is Quinolinate synthase from Escherichia coli O45:K1 (strain S88 / ExPEC).